Reading from the N-terminus, the 381-residue chain is 1-deoxy-D-xylulose 5-phosphate reductoisomerase (381 aa).

Residues Thr10, Gly11, Ser12, Ile13, Gly36, Lys37, Asn38, and Asn122 each coordinate NADPH. A 1-deoxy-D-xylulose 5-phosphate-binding site is contributed by Lys123. Glu124 is a binding site for NADPH. Mn(2+) is bound at residue Asp148. Positions 149, 150, 173, and 196 each coordinate 1-deoxy-D-xylulose 5-phosphate. Residue Glu150 coordinates Mn(2+). Gly202 is a binding site for NADPH. Positions 209, 214, 215, and 218 each coordinate 1-deoxy-D-xylulose 5-phosphate. Glu218 lines the Mn(2+) pocket.

The protein belongs to the DXR family. Mg(2+) serves as cofactor. It depends on Mn(2+) as a cofactor.

It catalyses the reaction 2-C-methyl-D-erythritol 4-phosphate + NADP(+) = 1-deoxy-D-xylulose 5-phosphate + NADPH + H(+). Its pathway is isoprenoid biosynthesis; isopentenyl diphosphate biosynthesis via DXP pathway; isopentenyl diphosphate from 1-deoxy-D-xylulose 5-phosphate: step 1/6. Functionally, catalyzes the NADPH-dependent rearrangement and reduction of 1-deoxy-D-xylulose-5-phosphate (DXP) to 2-C-methyl-D-erythritol 4-phosphate (MEP). The polypeptide is 1-deoxy-D-xylulose 5-phosphate reductoisomerase (Desulfitobacterium hafniense (strain DSM 10664 / DCB-2)).